We begin with the raw amino-acid sequence, 624 residues long: Dihydroxy-acid dehydratase (624 aa).

Asp-81 contacts Mg(2+). [2Fe-2S] cluster is bound at residue Cys-122. Residues Asp-123 and Lys-124 each coordinate Mg(2+). N6-carboxylysine is present on Lys-124. Cys-195 contacts [2Fe-2S] cluster. A Mg(2+)-binding site is contributed by Glu-499. Residue Ser-525 is the Proton acceptor of the active site.

The protein belongs to the IlvD/Edd family. In terms of assembly, homodimer. [2Fe-2S] cluster is required as a cofactor. Mg(2+) serves as cofactor.

The catalysed reaction is (2R)-2,3-dihydroxy-3-methylbutanoate = 3-methyl-2-oxobutanoate + H2O. It catalyses the reaction (2R,3R)-2,3-dihydroxy-3-methylpentanoate = (S)-3-methyl-2-oxopentanoate + H2O. It functions in the pathway amino-acid biosynthesis; L-isoleucine biosynthesis; L-isoleucine from 2-oxobutanoate: step 3/4. It participates in amino-acid biosynthesis; L-valine biosynthesis; L-valine from pyruvate: step 3/4. Functions in the biosynthesis of branched-chain amino acids. Catalyzes the dehydration of (2R,3R)-2,3-dihydroxy-3-methylpentanoate (2,3-dihydroxy-3-methylvalerate) into 2-oxo-3-methylpentanoate (2-oxo-3-methylvalerate) and of (2R)-2,3-dihydroxy-3-methylbutanoate (2,3-dihydroxyisovalerate) into 2-oxo-3-methylbutanoate (2-oxoisovalerate), the penultimate precursor to L-isoleucine and L-valine, respectively. In Shewanella baltica (strain OS185), this protein is Dihydroxy-acid dehydratase.